Here is a 345-residue protein sequence, read N- to C-terminus: Aminopeptidase YpdE (345 aa).

His-62 and Asp-166 together coordinate a divalent metal cation. Catalysis depends on Glu-198, which acts as the Proton acceptor. Positions 199, 221, and 308 each coordinate a divalent metal cation.

The protein belongs to the peptidase M42 family. It depends on Co(2+) as a cofactor. Requires Ni(2+) as cofactor. Mn(2+) serves as cofactor. The cofactor is Cu(2+).

Functionally, has a broad aminopeptidase activity on non-blocked peptides by progressively cleaving amino acids off the peptide substrate. Aminopeptidase activity stops at the residue before the first proline in the peptide. Cannot cleave when proline is the first N-terminal residue. In Escherichia coli (strain K12), this protein is Aminopeptidase YpdE (ypdE).